The primary structure comprises 185 residues: Capsid protein (185 aa).

Residues asparagine 136–cysteine 185 form a disordered region. The segment covering valine 149–serine 178 has biased composition (basic residues). A phosphoserine; by host mark is found at serine 157, serine 164, and serine 172. Residues serine 157–proline 163 form a 1; half-length repeat. The tract at residues serine 157–glutamine 179 is 3 X 8 AA repeats of S-P-R-R-R-[PR]-S-Q. The Bipartite nuclear localization signal signature appears at arginine 160–arginine 177. Tandem repeats lie at residues serine 164–glutamine 171 and serine 172–glutamine 179. The segment at glutamine 179–cysteine 185 is RNA binding.

Belongs to the orthohepadnavirus core antigen family. As to quaternary structure, homodimerizes, then multimerizes. Interacts with cytosol exposed regions of viral L glycoprotein present in the reticulum-to-Golgi compartment. Interacts with human FLNB. Phosphorylated form interacts with host importin alpha; this interaction depends on the exposure of the NLS, which itself depends upon genome maturation and/or phosphorylation of the capsid protein. Interacts with host NUP153. In terms of processing, phosphorylated by host SRPK1, SRPK2, and maybe protein kinase C or GAPDH. Phosphorylation is critical for pregenomic RNA packaging. Protein kinase C phosphorylation is stimulated by HBx protein and may play a role in transport of the viral genome to the nucleus at the late step during the viral replication cycle.

It is found in the virion. The protein localises to the host cytoplasm. In terms of biological role, self assembles to form an icosahedral capsid. Most capsids appear to be large particles with an icosahedral symmetry of T=4 and consist of 240 copies of capsid protein, though a fraction forms smaller T=3 particles consisting of 180 capsid proteins. Entering capsids are transported along microtubules to the nucleus. Phosphorylation of the capsid is thought to induce exposure of nuclear localization signal in the C-terminal portion of the capsid protein that allows binding to the nuclear pore complex via the importin (karyopherin-) alpha and beta. Capsids are imported in intact form through the nuclear pore into the nuclear basket, where it probably binds NUP153. Only capsids that contain the mature viral genome can release the viral DNA and capsid protein into the nucleoplasm. Immature capsids get stuck in the basket. Capsids encapsulate the pre-genomic RNA and the P protein. Pre-genomic RNA is reverse-transcribed into DNA while the capsid is still in the cytoplasm. The capsid can then either be directed to the nucleus, providing more genomes for transcription, or bud through the endoplasmic reticulum to provide new virions. The polypeptide is Capsid protein (Homo sapiens (Human)).